We begin with the raw amino-acid sequence, 611 residues long: MVKNLIFWLVITVVLMSIFQNFNTNDVNNHKVDYSTFLSEVNQDQIREAYINGRMISVTKKDSSKYTTYIPINDPKLLDNLLVKRVKIIGAIPEEPSLFISILISWFPMLLLIGVWIFFMRQMQMGGGKGAMSFGKSKARMLSEDQIQTTFADVAGCDEAKEEVSELVEYLKEPSRFQKLGGKIPKGILMVGPPGTGKTLLAKAIAGEAKVPFFTISGSDFVEMFVGVGASRVRDMFEHSRKSAPCIIFIDEIDAVGRQRGAGLGGGHDEREQTLNQMLVEMDGFDGNEGIILIAATNRPDVLDPALLRPGRFDRQVIVALPDIRGREQILKVHMRKVPLSKDVDPMIIARGTPGFSGADLANLVNEAALFAARLDKRVVSMLEFERAKDKMMMGSERRSMVMSDFQKESTAYHEAGHVIIGRLVPDHDPAHKVTIIPRGRALGVTFFLPESDTLSISRQKLESQISTLYGGRLAEEIIYGAKNVSTGAYNDIKIATSLAKNMVTQWGFSEKLGPLLYAEEEGEIFLGRSVAKAKHMSDETARIIDEEVKLLIEINYSRARNILNENIDILHAMKEALIKYETIDAFQIDDLMKRREVRQPKGWIETDTNK.

Residue Met1 is a topological domain, cytoplasmic. Residues 2–22 form a helical membrane-spanning segment; sequence VKNLIFWLVITVVLMSIFQNF. The Extracellular portion of the chain corresponds to 23-98; sequence NTNDVNNHKV…IGAIPEEPSL (76 aa). Residues 99–119 form a helical membrane-spanning segment; the sequence is FISILISWFPMLLLIGVWIFF. At 120–611 the chain is on the cytoplasmic side; it reads MRQMQMGGGK…KGWIETDTNK (492 aa). 192–199 provides a ligand contact to ATP; sequence GPPGTGKT. His414 provides a ligand contact to Zn(2+). Residue Glu415 is part of the active site. His418 and Asp492 together coordinate Zn(2+).

It in the central section; belongs to the AAA ATPase family. The protein in the C-terminal section; belongs to the peptidase M41 family. In terms of assembly, homohexamer. Zn(2+) is required as a cofactor.

Its subcellular location is the cell membrane. Its function is as follows. Acts as a processive, ATP-dependent zinc metallopeptidase for both cytoplasmic and membrane proteins. Plays a role in the quality control of integral membrane proteins. This is ATP-dependent zinc metalloprotease FtsH from Buchnera aphidicola subsp. Acyrthosiphon pisum (strain APS) (Acyrthosiphon pisum symbiotic bacterium).